Here is a 574-residue protein sequence, read N- to C-terminus: Sulfate adenylyltransferase (574 aa).

An N-terminal region spans residues 1-170 (MANAPHGGVL…VQAVSKPAYY (170 aa)). The tract at residues 171-395 (DYVALRYTPA…LRESYPPKAK (225 aa)) is catalytic. Position 198 (glutamine 198) interacts with sulfate. Residues 198 to 201 (QTRN) and 292 to 295 (GRDH) each bind ATP. Active-site residues include threonine 199, arginine 200, and asparagine 201. Residue arginine 200 coordinates sulfate. Alanine 296 lines the sulfate pocket. Methionine 334 is an ATP binding site. Residues 396 to 574 (QGFTLFLTGL…ILLLEAQSLI (179 aa)) are allosteric regulation domain; adenylyl-sulfate kinase-like. Residues 435 to 438 (ETVR), arginine 452, 478 to 479 (IA), and lysine 519 each bind 3'-phosphoadenylyl sulfate.

It in the N-terminal section; belongs to the sulfate adenylyltransferase family. In the C-terminal section; belongs to the APS kinase family. In terms of assembly, homohexamer. Dimer of trimers.

It localises to the cytoplasm. The enzyme catalyses sulfate + ATP + H(+) = adenosine 5'-phosphosulfate + diphosphate. Its pathway is sulfur metabolism; hydrogen sulfide biosynthesis; sulfite from sulfate: step 1/3. Its activity is regulated as follows. Allosterically inhibited by 3'-phosphoadenosine 5'-phosphosulfate (PAPS). Functionally, catalyzes the first intracellular reaction of sulfate assimilation, forming adenosine-5'-phosphosulfate (APS) from inorganic sulfate and ATP. Plays an important role in sulfate activation as a component of the biosynthesis pathway of sulfur-containing amino acids. The sequence is that of Sulfate adenylyltransferase from Mycosarcoma maydis (Corn smut fungus).